The sequence spans 683 residues: Zinc finger protein 510 (683 aa).

Residues 46–117 (VSFKDVTIEF…EEEFSNQSHP (72 aa)) form the KRAB domain. A C2H2-type 1; degenerate zinc finger spans residues 254-276 (FECNKIGKAFNDKANCVKHNSSH). C2H2-type zinc fingers lie at residues 404-426 (YKCNECGKSFCQKGHLIQHQRTH), 432-454 (FECSECGKTFSQKSHLSTHQRIH), 460-482 (YKCNECGKTFVQKSTLRGHQRIH), 488-510 (YECSECGKTFVQKSTLRDHHRIH), 516-538 (FQCNQCGKTFGQKSNLRIHQRTH), 544-566 (YQCNECEKSFWRKDHLIQHQKTH), 572-594 (FKCNECGKTFARTSTLRVHQRIH), 600-622 (FKCNECGKKFVRKAILSDHQRIH), and 628-650 (FQCNKCGKTFGQKSNLRIHQRTH).

Belongs to the krueppel C2H2-type zinc-finger protein family.

The protein resides in the nucleus. In terms of biological role, may be involved in transcriptional regulation. The chain is Zinc finger protein 510 (ZNF510) from Homo sapiens (Human).